Here is a 534-residue protein sequence, read N- to C-terminus: CTP synthase (534 aa).

The tract at residues 1 to 268 (MAAKYIFVTG…DQIVCDHLQL (268 aa)) is amidoligase domain. Residue Ser-14 participates in CTP binding. Ser-14 lines the UTP pocket. 15-20 (SLGKGI) contributes to the ATP binding site. Residue Tyr-55 coordinates L-glutamine. Asp-72 contacts ATP. Positions 72 and 142 each coordinate Mg(2+). CTP contacts are provided by residues 149 to 151 (DIE), 189 to 194 (KSKPTQ), and Lys-225. UTP is bound by residues 189 to 194 (KSKPTQ) and Lys-225. The Glutamine amidotransferase type-1 domain maps to 293 to 534 (RIAIVGKYVE…FVRNALAAQA (242 aa)). Gly-355 is a binding site for L-glutamine. Cys-382 serves as the catalytic Nucleophile; for glutamine hydrolysis. Residues 383 to 386 (LGMQ), Glu-406, and Arg-463 each bind L-glutamine. Residues His-508 and Glu-510 contribute to the active site.

Belongs to the CTP synthase family. In terms of assembly, homotetramer.

The catalysed reaction is UTP + L-glutamine + ATP + H2O = CTP + L-glutamate + ADP + phosphate + 2 H(+). It catalyses the reaction L-glutamine + H2O = L-glutamate + NH4(+). The enzyme catalyses UTP + NH4(+) + ATP = CTP + ADP + phosphate + 2 H(+). The protein operates within pyrimidine metabolism; CTP biosynthesis via de novo pathway; CTP from UDP: step 2/2. Allosterically activated by GTP, when glutamine is the substrate; GTP has no effect on the reaction when ammonia is the substrate. The allosteric effector GTP functions by stabilizing the protein conformation that binds the tetrahedral intermediate(s) formed during glutamine hydrolysis. Inhibited by the product CTP, via allosteric rather than competitive inhibition. Catalyzes the ATP-dependent amination of UTP to CTP with either L-glutamine or ammonia as the source of nitrogen. Regulates intracellular CTP levels through interactions with the four ribonucleotide triphosphates. The polypeptide is CTP synthase (Shouchella clausii (strain KSM-K16) (Alkalihalobacillus clausii)).